Here is a 557-residue protein sequence, read N- to C-terminus: MALLSEELSSILPNPDFDDEEEDYVERETSHADERQIGVKFHIPPYGQRKGWFPSSPEDFGDGGAFPEIHVAQYPLDMGRKRSAKSAGNTLALQVTSSGAVDYNAIARQGHEHGELVQASFRDLIPLRARLGVGEISLEKPSDEQKQEVANKTKLALQKILSKQIAQSQPKSAVVQQRDDPVYIRYTPSNQMGQALSKQRIIKMVTAEQDPMEPPKFRHKKVPRGPPSPPPPVLHSPPRKVSAQEQQDWQIPPSISNWKNPKGYTIPLDKRLAADGRGLNDVEINDGFAKFSEALYTVERQAREEVRYRAIMRQKMAEKEKQEKEQRLFMLAQKAREDRMGRNAASSGPSHAKPRSTSVSSEERSRSRAGSFSHHSESENEDEDSEAFRRRQELRRERRRQAEKDLRLSRMGAEKRAKLAEKDRPRDVAERVALGLSKPSMSSDTMIDSRLFNQASGLGSGFQDEDSYNVYDKPWRAAPSSTLYRPGATLSRQVDASAELERITSESRYDVLGNAHKKFKGSDEVVESRAGPVTFEKDIADPFGVDTFLNNVSSKKT.

Disordered regions lie at residues 1 to 32, 208 to 243, and 316 to 444; these read MALL…TSHA, EQDP…KVSA, and MAEK…MSSD. Over residues 16 to 25 the composition is skewed to acidic residues; it reads DFDDEEEDYV. Positions 224-235 are enriched in pro residues; the sequence is RGPPSPPPPVLH. Phosphoserine occurs at positions 228 and 236. Over residues 316 to 327 the composition is skewed to basic and acidic residues; the sequence is MAEKEKQEKEQR. Phosphoserine is present on S376. Residues 386-430 show a composition bias toward basic and acidic residues; sequence EAFRRRQELRRERRRQAEKDLRLSRMGAEKRAKLAEKDRPRDVAE.

The protein belongs to the SNW family. In terms of assembly, homodimer. Interacts with cyp1 and the small 23 kDa subunit of the splicing factor U2AF (u2af23). Belongs to the 40S cdc5-associated complex (or cwf complex), a spliceosome sub-complex reminiscent of a late-stage spliceosome composed of the U2, U5 and U6 snRNAs and at least brr2, cdc5, cwf2/prp3, cwf3/syf1, cwf4/syf3, cwf5/ecm2, spp42/cwf6, cwf7/spf27, cwf8, cwf9, cwf10, cwf11, cwf12, prp45/cwf13, cwf14, cwf15, cwf16, cwf17, cwf18, cwf19, cwf20, cwf21, cwf22, cwf23, cwf24, cwf25, cwf26, cyp7/cwf27, cwf28, cwf29/ist3, lea1, msl1, prp5/cwf1, prp10, prp12/sap130, prp17, prp22, sap61, sap62, sap114, sap145, slu7, smb1, smd1, smd3, smf1, smg1 and syf2.

The protein localises to the nucleus. In terms of biological role, involved in pre-mRNA splicing. The polypeptide is Pre-mRNA-processing protein 45 (prp45) (Schizosaccharomyces pombe (strain 972 / ATCC 24843) (Fission yeast)).